The sequence spans 171 residues: Co-chaperone protein HscB (171 aa).

Residues 2 to 74 form the J domain; the sequence is DYFTLFGLPA…LTRAEYLLSL (73 aa).

Belongs to the HscB family. In terms of assembly, interacts with HscA and stimulates its ATPase activity. Interacts with IscU.

Co-chaperone involved in the maturation of iron-sulfur cluster-containing proteins. Seems to help targeting proteins to be folded toward HscA. The polypeptide is Co-chaperone protein HscB (Salmonella paratyphi A (strain AKU_12601)).